The following is a 418-amino-acid chain: 26S proteasome regulatory subunit 6B (418 aa).

Residue Met1 is modified to N-acetylmethionine. Position 21 is a phosphoserine (Ser21). Thr25 carries the post-translational modification Phosphothreonine. The residue at position 28 (Ser28) is a Phosphoserine. Position 206–213 (206–213 (GPPGCGKT)) interacts with ATP. 2 positions are modified to N6-acetyllysine: Lys397 and Lys401.

It belongs to the AAA ATPase family. In terms of assembly, component of the 19S proteasome regulatory particle complex. The 26S proteasome consists of a 20S core particle (CP) and two 19S regulatory subunits (RP). The regulatory particle is made of a lid composed of 9 subunits, a base containing 6 ATPases including PSMC4 and few additional components. Interacts with NR1I3. Interacts with PAAF1. Interacts with TRIM5. Interacts with ZFAND1.

It is found in the cytoplasm. Its subcellular location is the nucleus. Its function is as follows. Component of the 26S proteasome, a multiprotein complex involved in the ATP-dependent degradation of ubiquitinated proteins. This complex plays a key role in the maintenance of protein homeostasis by removing misfolded or damaged proteins, which could impair cellular functions, and by removing proteins whose functions are no longer required. Therefore, the proteasome participates in numerous cellular processes, including cell cycle progression, apoptosis, or DNA damage repair. PSMC4 belongs to the heterohexameric ring of AAA (ATPases associated with diverse cellular activities) proteins that unfolds ubiquitinated target proteins that are concurrently translocated into a proteolytic chamber and degraded into peptides. The chain is 26S proteasome regulatory subunit 6B (Psmc4) from Mus musculus (Mouse).